A 101-amino-acid polypeptide reads, in one-letter code: MAKESMKAREAKRTKLVAKYAEKRAALKAIISDVNVSEEERWDAVLKLQQLPRDSSSSRQRNRCRVTGRPHGYLRKFGLSRIKLREAAMRGEVPGLKKASW.

Belongs to the universal ribosomal protein uS14 family. Part of the 30S ribosomal subunit. Contacts proteins S3 and S10.

In terms of biological role, binds 16S rRNA, required for the assembly of 30S particles and may also be responsible for determining the conformation of the 16S rRNA at the A site. The sequence is that of Small ribosomal subunit protein uS14 from Alteromonas mediterranea (strain DSM 17117 / CIP 110805 / LMG 28347 / Deep ecotype).